The chain runs to 245 residues: Ribosomal RNA small subunit methyltransferase G (245 aa).

S-adenosyl-L-methionine contacts are provided by residues Gly-80, Phe-85, 103–105 (DAT), 131–132 (AE), and Arg-150.

Belongs to the methyltransferase superfamily. RNA methyltransferase RsmG family.

It is found in the cytoplasm. Its function is as follows. Specifically methylates the N7 position of a guanine in 16S rRNA. The protein is Ribosomal RNA small subunit methyltransferase G of Deinococcus geothermalis (strain DSM 11300 / CIP 105573 / AG-3a).